The chain runs to 388 residues: AT-rich binding protein (388 aa).

Residues 29-52 (IVCHTCQEELQTQDQFWKHIQDEH) form a C2H2-type 1 zinc finger. Low complexity-rich tracts occupy residues 138–165 (QQHQ…LQQQ) and 249–265 (VSVS…STTP). Disordered regions lie at residues 138–168 (QQHQ…QRDV) and 240–265 (PPPP…STTP). 2 C2H2-type zinc fingers span residues 321 to 345 (YVCD…RVVH) and 351 to 374 (FNCE…KKKH).

The protein localises to the nucleus. Functionally, may be a transcription factor for genes having (A+T) stretches in their promoter and/or enhancer regions. Binds to AT rich DNA. This Drosophila melanogaster (Fruit fly) protein is AT-rich binding protein.